The following is a 58-amino-acid chain: Large ribosomal subunit protein bL32 (58 aa).

Over residues methionine 1–alanine 19 the composition is skewed to basic residues. A disordered region spans residues methionine 1–lysine 22.

Belongs to the bacterial ribosomal protein bL32 family.

The sequence is that of Large ribosomal subunit protein bL32 from Clostridioides difficile (strain 630) (Peptoclostridium difficile).